Reading from the N-terminus, the 396-residue chain is Probable intron-encoded endonuclease aI3 (396 aa).

Residues 51–90 (TNNTNNNNPADSSSYESRMRAAGNSNSNSNSNSDSNINNT) are disordered. The span at 74–90 (NSNSNSNSNSDSNINNT) shows a compositional bias: low complexity.

Belongs to the LAGLIDADG endonuclease family.

Its subcellular location is the mitochondrion. Mitochondrial DNA endonuclease involved in intron homing. The chain is Probable intron-encoded endonuclease aI3 (aI3) from Kluyveromyces lactis (strain ATCC 8585 / CBS 2359 / DSM 70799 / NBRC 1267 / NRRL Y-1140 / WM37) (Yeast).